The following is a 1040-amino-acid chain: MQVLPPSSTGGPSRLFIMRPVATTLLMVAILLAGIIGYRALPVSALPEVDYPTIQVVTLYPGASPDVMTSAVTAPLERQFGQMSGLKQMSSQSSGGASVITLQFQLTLPLDVAEQEVQAAINAATNLLPSDLPNPPVYSKVNPADPPIMTLAVTSIAMPMTQVEDMVETRVAQKISQISGVGLVTLSGGQRPAVRVKLNAQAIAALGLTSETVRTAITGANVNSAKGSLDGPSRAVTLSANDQMQSAEEYRQLIIAYQNGAPIRLGDVATVEQGAENSWLGAWANKEQAIVMNVQRQPGANIISTADSIRQMLPQLTESLPKSVKVTVLSDRTTNIRASVDDTQFELMMAIALVVMIIYLFLRNIPATIIPGVAVPLSLIGTFAVMVFLDFSINNLTLMALTIATGFVVDDAIVVIENISRYIEKGEKPLAAALKGAGEIGFTIISLTFSLIAVLIPLLFMGDIVGRLFREFAITLAVAILISAVVSLTLTPMMCARMLSQESLRKQNRFSRASEKMFDRIIAAYGRGLAKVLNHPWLTLSVALSTLLLSVLLWVFIPKGFFPVQDNGIIQGTLQAPQSSSFANMAQRQRQVADVILQDPAVQSLTSFVGVDGTNPSLNSARLQINLKPLDERDDRVQKVIARLQTAVDKVPGVDLFLQPTQDLTIDTQVSRTQYQFTLQATSLDALSTWVPQLMEKLQQLPQLSDVSSDWQDKGLVAYVNVDRDSASRLGISMADVDNALYNAFGQRLISTIYTQANQYRVVLEHNTENTPGLAALDTIRLTSSDGGVVPLSSIAKIEQRFAPLSINHLDQFPVTTISFNVPDNYSLGDAVQAIMDTEKTLNLPVDITTQFQGSTLAFQSALGSTVWLIVAAVVAMYIVLGILYESFIHPITILSTLPTAGVGALLALLIAGSELDVIAIIGIILLIGIVKKNAIMMIDFALAAEREQGMSPREAIYQACLLRFRPILMTTLAALLGALPLMLSTGVGAELRRPLGIGMVGGLIVSQVLTLFTTPVIYLLFDRLALWTKSRFARHEEEA.

The next 12 membrane-spanning stretches (helical) occupy residues 16-36, 347-367, 369-389, 396-416, 440-460, 472-492, 537-557, 863-883, 888-908, 911-931, 968-988, and 998-1018; these read FIMR…AGII, LMMA…NIPA, IIPG…MVFL, LTLM…IVVI, IGFT…PLLF, FAIT…TLTP, WLTL…WVFI, LGST…VLGI, FIHP…ALLA, IAGS…IGIV, ILMT…STGV, and IGMV…TPVI.

The protein belongs to the resistance-nodulation-cell division (RND) (TC 2.A.6) family. MdtB subfamily. In terms of assembly, part of a tripartite efflux system composed of MdtA, MdtB and MdtC. MdtB forms a heteromultimer with MdtC.

The protein localises to the cell inner membrane. In terms of biological role, the MdtABC tripartite complex confers resistance against novobiocin and deoxycholate. This Escherichia coli O9:H4 (strain HS) protein is Multidrug resistance protein MdtB.